The primary structure comprises 353 residues: Peptide chain release factor 1 (353 aa).

Residue glutamine 230 is modified to N5-methylglutamine.

The protein belongs to the prokaryotic/mitochondrial release factor family. Methylated by PrmC. Methylation increases the termination efficiency of RF1.

The protein localises to the cytoplasm. Its function is as follows. Peptide chain release factor 1 directs the termination of translation in response to the peptide chain termination codons UAG and UAA. The protein is Peptide chain release factor 1 of Leptospira biflexa serovar Patoc (strain Patoc 1 / ATCC 23582 / Paris).